The primary structure comprises 625 residues: Grainyhead-like protein 2 homolog (625 aa).

The segment at 1-93 is transcription activation; the sequence is MSQESDNNKR…KASDSQEDQD (93 aa). Disordered regions lie at residues 198 to 222 and 428 to 452; these read ASHS…SFKD and EERK…SSDG. Residues 244–482 form the Grh/CP2 DB domain; sequence GSGTFQYTLE…DLHSQPVLFI (239 aa). The span at 440–451 shows a compositional bias: polar residues; sequence QASQAQCNNSSD.

Belongs to the grh/CP2 family. Grainyhead subfamily. In terms of assembly, homodimer, also forms heterodimers with GRHL1 or GRHL3.

Its subcellular location is the nucleus. The protein localises to the membrane. Functionally, transcription factor playing an important role in primary neurulation and in epithelial development. Binds directly to the consensus DNA sequence 5'-AACCGGTT-3' acting as an activator and repressor on distinct target genes. During embryogenesis, plays unique and cooperative roles with GRHL3 in establishing distinct zones of primary neurulation. Essential for closure 3 (rostral end of the forebrain), functions cooperatively with GRHL3 in closure 2 (forebrain/midbrain boundary) and posterior neuropore closure. Regulates epithelial morphogenesis acting as a target gene-associated transcriptional activator of apical junctional complex components. Up-regulates of CLDN3 and CLDN4, as well as of RAB25, which increases the CLDN4 protein and its localization at tight junctions. Comprises an essential component of the transcriptional machinery that establishes appropriate expression levels of CLDN4 and CDH1 in different types of epithelia. Exhibits functional redundancy with GRHL3 in epidermal morphogenetic events such as eyelid fusion and epidermal wound repair. In lung, forms a regulatory loop with NKX2-1 that coordinates lung epithelial cell morphogenesis and differentiation. In keratinocytes, plays a role in telomerase activation during cellular proliferation, regulates TERT expression by binding to TERT promoter region and inhibiting DNA methylation at the 5'-CpG island, possibly by interfering with DNMT1 enzyme activity. In addition, impairs keratinocyte differentiation and epidermal function by inhibiting the expression of genes clustered at the epidermal differentiation complex (EDC) as well as GRHL1 and GRHL3 through epigenetic mechanisms. The sequence is that of Grainyhead-like protein 2 homolog (Grhl2) from Mus musculus (Mouse).